A 305-amino-acid chain; its full sequence is Superkiller complex protein 8 (305 aa).

M1 carries the post-translational modification N-acetylmethionine. Position 2 is an N-acetylthreonine; in WD repeat-containing protein 61, N-terminally processed (T2). WD repeat units lie at residues 14-57 (AHDD…LELQ), 62-101 (GHQL…QMKS), 104-143 (AGPV…KEYS), 146-187 (TRGK…HTLE), 188-227 (GHAM…LAGT), 230-269 (GHAS…CIHT), and 272-305 (DHQD…DCPI).

It belongs to the SKI8 family. As to quaternary structure, component of the PAF1 complex, which consists of CDC73, PAF1, LEO1, CTR9, RTF1 and SKIC8. The PAF1 complex interacts with PHF5A. Within the PAF1 complex interacts directly with PHF5A. Component of the SKI complex which consists of SKIC2, SKIC3 and SKIC8.

It is found in the nucleus. Its subcellular location is the cytoplasm. In terms of biological role, component of the PAF1 complex (PAF1C) which has multiple functions during transcription by RNA polymerase II and is implicated in regulation of development and maintenance of embryonic stem cell pluripotency. PAF1C associates with RNA polymerase II through interaction with POLR2A CTD non-phosphorylated and 'Ser-2'- and 'Ser-5'-phosphorylated forms and is involved in transcriptional elongation, acting both independently and synergistically with TCEA1 and in cooperation with the DSIF complex and HTATSF1. PAF1C is required for transcription of Hox and Wnt target genes. PAF1C is involved in hematopoiesis and stimulates transcriptional activity of KMT2A/MLL1; it promotes leukemogenesis through association with KMT2A/MLL1-rearranged oncoproteins, such as KMT2A/MLL1-MLLT3/AF9 and KMT2A/MLL1-MLLT1/ENL. PAF1C is involved in histone modifications such as ubiquitination of histone H2B and methylation on histone H3 'Lys-4' (H3K4me3). PAF1C recruits the RNF20/40 E3 ubiquitin-protein ligase complex and the E2 enzyme UBE2A or UBE2B to chromatin which mediate monoubiquitination of 'Lys-120' of histone H2B (H2BK120ub1); UB2A/B-mediated H2B ubiquitination is proposed to be coupled to transcription. PAF1C is involved in mRNA 3' end formation probably through association with cleavage and poly(A) factors. In case of infection by influenza A strain H3N2, PAF1C associates with viral NS1 protein, thereby regulating gene transcription. Required for mono- and trimethylation on histone H3 'Lys-4' (H3K4me3), dimethylation on histone H3 'Lys-79' (H3K4me3). Required for Hox gene transcription. Also acts as a component of the SKI complex, a multiprotein complex that assists the RNA-degrading exosome during the mRNA decay and quality-control pathways. The SKI complex catalyzes mRNA extraction from 80S ribosomal complexes in the 3'-5' direction and channels mRNA to the cytosolic exosome for degradation. SKI-mediated extraction of mRNA from stalled ribosomes allow binding of the Pelota-HBS1L complex and subsequent ribosome disassembly by ABCE1 for ribosome recycling. This Rattus norvegicus (Rat) protein is Superkiller complex protein 8 (Skic8).